A 1642-amino-acid chain; its full sequence is Cobra venom factor (1642 aa).

The signal sequence occupies residues 1 to 22 (MERMALYLVAALLIGFPGSSHG). Residues N153, N158, and N209 are each glycosylated (N-linked (GlcNAc...) asparagine). Mg(2+) is bound by residues P516, D539, V540, and D542. Intrachain disulfides connect C544–C801, C609–C644, C677–C704, C678–C711, C691–C712, C857–C1492, C1340–C1468, C1368–C1437, C1485–C1490, C1497–C1569, C1516–C1640, and C1616–C1625. Positions 650–732 (RRRRSSVLLL…QRESELFLAR (83 aa)) are excised as a propeptide. A C3a-like domain region spans residues 654 to 732 (SSVLLLDSNA…QRESELFLAR (79 aa)). An Anaphylatoxin-like domain is found at 677 to 712 (CCEDVMHENPMGYTCEKRAKYIQEGDACKAAFLECC). The segment at 736–747 (EDGFIADSDIIS) is factor B binding site. A propeptide spanning residues 985–1263 (HLIITPSGCG…VMAFQALAEY (279 aa)) is cleaved from the precursor. The C3d-like domain stretch occupies residues 985–1263 (HLIITPSGCG…VMAFQALAEY (279 aa)). Residues 993-996 (CGEQ) constitute a cross-link (isoglutamyl cysteine thioester (Cys-Gln)). Residues 1190 to 1253 (VLMAASTGRD…GETYGQTQAT (64 aa)) form a factor H binding site region. N1346 carries N-linked (GlcNAc...) asparagine glycosylation. Residues 1497–1640 (CSSLNHQERI…FSYTLTEFGC (144 aa)) form the NTR domain.

This sequence belongs to the venom complement C3 homolog family. As to quaternary structure, heterotrimer of alpha, beta and gamma chains; disulfide-linked. Is active with factor B in the presence of factor D. In terms of processing, first processed by the removal of 4 Arg residues by furin-type protease, forming two chains, alpha and gamma/beta precursor, linked by a disulfide bond. Probably, the cobrin cleaves the C3a-like domain and then the C3d-like domain, generating the mature cobra venom factor (CVF). This mature CVF is composed of three chains: alpha, gamma and beta. Post-translationally, contains 3 N-linked oligosaccharide chains, two in the alpha-chain and one in the beta-chain. Glycosylation is not required for the biological activity. However, it contributes to the immunogenicity of CVF. The carbohydrate content is 7.4. The major oligosaccharide is a symmetric fucosylated biantennary complex-type chain with an unusual alpha-galactosylated Le(x) structure at its non-reducing end. Expressed by the venom gland.

It localises to the secreted. Its function is as follows. Complement-activating protein in cobra venom. It is a structural and functional analog of complement component C3b, the activated form of C3. It binds factor B (CFB), which is subsequently cleaved by factor D (CFD) to form the bimolecular complex CVF/Bb. CVF/Bb is a C3/C5 convertase that cleaves both complement components C3 and C5. Structurally, it resembles the C3b degradation product C3c, which is not able to form a C3/C5 convertase. Unlike C3b/Bb, CVF/Bb is a stable complex and completely resistant to the actions of complement regulatory factors H (CFH) and I (CFI). Therefore, CVF continuously activates complement resulting in the depletion of complement activity. In Naja kaouthia (Monocled cobra), this protein is Cobra venom factor.